We begin with the raw amino-acid sequence, 317 residues long: Ribose-phosphate pyrophosphokinase (317 aa).

Residues 43–45 (DGE) and 102–103 (RQ) contribute to the ATP site. ADP is bound by residues K106 and R110. H136 lines the Mg(2+) pocket. ADP-binding positions include Q141 and 149–150 (DH). Residue D175 participates in Mg(2+) binding. K198 is a catalytic residue. Residues R200, D224, and 228-232 (DTAGT) each bind D-ribose 5-phosphate. 311–313 (SVS) lines the ADP pocket.

This sequence belongs to the ribose-phosphate pyrophosphokinase family. Class I subfamily. Homohexamer; trimer of dimers. Mg(2+) is required as a cofactor.

It is found in the cytoplasm. The enzyme catalyses D-ribose 5-phosphate + ATP = 5-phospho-alpha-D-ribose 1-diphosphate + AMP + H(+). It functions in the pathway metabolic intermediate biosynthesis; 5-phospho-alpha-D-ribose 1-diphosphate biosynthesis; 5-phospho-alpha-D-ribose 1-diphosphate from D-ribose 5-phosphate (route I): step 1/1. Activated by inorganic phosphate, and to a lesser extent by sulfate ions. In addition to form a complex with ATP, Mg(2+) also acts as a cofactor. Strongly inhibited by ADP through competitive binding at the activation site and at a specific allosteric site. Less strongly inhibited by alpha,beta-methylene ATP (mADP), AMP, GDP, GMP and UTP. Involved in the biosynthesis of the central metabolite phospho-alpha-D-ribosyl-1-pyrophosphate (PRPP) via the transfer of pyrophosphoryl group from ATP to 1-hydroxyl of ribose-5-phosphate (Rib-5-P). The protein is Ribose-phosphate pyrophosphokinase of Bacillus subtilis (strain 168).